The primary structure comprises 293 residues: Coatomer subunit epsilon-2 (293 aa).

It belongs to the COPE family. In terms of assembly, oligomeric complex that consists of at least the alpha, beta, beta', gamma, delta, epsilon and zeta subunits.

It localises to the cytoplasm. The protein localises to the golgi apparatus membrane. Its subcellular location is the cytoplasmic vesicle. The protein resides in the COPI-coated vesicle membrane. In terms of biological role, the coatomer is a cytosolic protein complex that binds to dilysine motifs and reversibly associates with Golgi non-clathrin-coated vesicles, which further mediate biosynthetic protein transport from the ER, via the Golgi up to the trans Golgi network. The coatomer complex is required for budding from Golgi membranes, and is essential for the retrograde Golgi-to-ER transport of dilysine-tagged proteins. In Arabidopsis thaliana (Mouse-ear cress), this protein is Coatomer subunit epsilon-2.